The chain runs to 500 residues: Phosphatidylserine decarboxylase proenzyme 1, mitochondrial (500 aa).

Residues 1–48 constitute a mitochondrion; not cleaved when targeted to the endoplasmic reticulum transit peptide; sequence MSIMPVKNALAQGRTLLMGRMPAVKFSTRMQLRNRTAVLWNRKFSTRL. Asn34 carries an N-linked (GlcNAc...) asparagine glycan. The Mitochondrial matrix segment spans residues 45 to 79; the sequence is STRLFVQQRRSSGEIVDRAKAAAANSGRKQVSMKW. An enables targeting to the endoplasmic reticulum in addition to mitochondria region spans residues 57–101; it reads GEIVDRAKAAAANSGRKQVSMKWVVLTSFTIVLGTILLVSRNDST. Residues 80–98 traverse the membrane as a helical segment; it reads VVLTSFTIVLGTILLVSRN. Residues 99–500 lie on the Mitochondrial intermembrane side of the membrane; sequence DSTEEDATEG…LGIIGKNDLK (402 aa). Residues Asp210, His348, and Ser463 each act as charge relay system; for autoendoproteolytic cleavage activity in the active site. Ser463 serves as the catalytic Schiff-base intermediate with substrate; via pyruvic acid; for decarboxylase activity. A Pyruvic acid (Ser); by autocatalysis modification is found at Ser463. Residues 475–492 form a required for processing and stability region; the sequence is FKFDVRVGDKVKMGQKLG.

This sequence belongs to the phosphatidylserine decarboxylase family. PSD-B subfamily. Eukaryotic type I sub-subfamily. As to quaternary structure, heterodimer of a large membrane-associated beta subunit and a small pyruvoyl-containing alpha subunit. Pyruvate serves as cofactor. Glycosylated at Asn-34 in the endoplasmic reticulum. In terms of processing, the precursor is imported via the TOM complex into mitochondria, where the N-terminal presequence is cleaved by the matrix-located proteases MPP (MAS1-MAS2) and OCT1. Post-translationally, is synthesized initially as an inactive proenzyme. Formation of the active enzyme involves a self-maturation process in which the active site pyruvoyl group is generated from an internal serine residue via an autocatalytic post-translational modification. Two non-identical subunits are generated from the proenzyme in this reaction, and the pyruvate is formed at the N-terminus of the alpha chain, which is derived from the carboxyl end of the proenzyme. The autoendoproteolytic cleavage occurs by a canonical serine protease mechanism, in which the side chain hydroxyl group of the serine supplies its oxygen atom to form the C-terminus of the beta chain, while the remainder of the serine residue undergoes an oxidative deamination to produce ammonia and the pyruvoyl prosthetic group on the alpha chain. During this reaction, the Ser that is part of the protease active site of the proenzyme becomes the pyruvoyl prosthetic group, which constitutes an essential element of the active site of the mature decarboxylase.

It localises to the mitochondrion inner membrane. It is found in the lipid droplet. The protein resides in the endoplasmic reticulum membrane. It catalyses the reaction a 1,2-diacyl-sn-glycero-3-phospho-L-serine + H(+) = a 1,2-diacyl-sn-glycero-3-phosphoethanolamine + CO2. The protein operates within phospholipid metabolism; phosphatidylethanolamine biosynthesis; phosphatidylethanolamine from CDP-diacylglycerol: step 2/2. Catalyzes the formation of phosphatidylethanolamine (PtdEtn) from phosphatidylserine (PtdSer). Plays a central role in phospholipid metabolism and in the interorganelle trafficking of phosphatidylserine. Phosphatidylethanolamine formed in the mitochondria is exported to other membranes to fullfill their requirements for PtdEtn. Required for normal mitochondrial morphology and proper mitochondrial fusion during yeast mating. Involved in lipid droplet biogenesis at the endoplasmic reticulum membrane. Required for induction of mitophagy during nitrogen starvation. Appears to play a specific role in supporting respiratory complex III activity. The protein is Phosphatidylserine decarboxylase proenzyme 1, mitochondrial of Saccharomyces cerevisiae (strain ATCC 204508 / S288c) (Baker's yeast).